The primary structure comprises 498 residues: Acetylcholine receptor subunit alpha-type acr-16 (498 aa).

Residues 1-19 (MSVCTLLISCAILAAPTLG) form the signal peptide. Topologically, residues 20–230 (SLQERRLYED…FYLHMRRRTL (211 aa)) are extracellular. 2 N-linked (GlcNAc...) asparagine glycosylation sites follow: Asn-43 and Asn-93. 2 disulfide bridges follow: Cys-147-Cys-161 and Cys-211-Cys-212. Helical transmembrane passes span 231-252 (YYGF…LGFT), 261-279 (ITLQ…SIVS), and 295-314 (FFTC…VYVL). Residues 315–472 (NLHYRTPETH…WKFAAMVVDR (158 aa)) are Cytoplasmic-facing. A helical membrane pass occupies residues 473–493 (LCLYVFTIFIIVSTIGIFWSA).

It belongs to the ligand-gated ion channel (TC 1.A.9) family. Acetylcholine receptor (TC 1.A.9.1) subfamily. Expressed in the body wall muscle.

The protein localises to the postsynaptic cell membrane. It is found in the cell membrane. After binding acetylcholine, the AChR responds by an extensive change in conformation that affects all subunits and leads to opening of an ion-conducting channel across the plasma membrane. A subunit of the levamisole-insensitive nicotinic receptor. This is Acetylcholine receptor subunit alpha-type acr-16 (acr-16) from Caenorhabditis elegans.